Consider the following 543-residue polypeptide: Fiber protein (543 aa).

Residues Met1–Leu36 are disordered.

Belongs to the adenoviridae fiber family. Homotrimer. Interacts (via N-terminal tail region) with pentons.

It localises to the virion. The protein localises to the host nucleus. In terms of biological role, forms spikes that protrude from each vertex of the icosahedral capsid. Interacts with host receptor to provide virion initial attachment to target cell. Fiber proteins are shed during virus entry, when virus is still at the cell surface. This Canine adenovirus serotype 1 (strain CLL) (CAdV-1) protein is Fiber protein.